The primary structure comprises 193 residues: Holliday junction branch migration complex subunit RuvA (193 aa).

The domain I stretch occupies residues Met-1 to Ala-64. Positions Thr-65–Thr-139 are domain II. A flexible linker region spans residues Thr-139–Pro-143. A domain III region spans residues Gln-144–Pro-193.

The protein belongs to the RuvA family. Homotetramer. Forms an RuvA(8)-RuvB(12)-Holliday junction (HJ) complex. HJ DNA is sandwiched between 2 RuvA tetramers; dsDNA enters through RuvA and exits via RuvB. An RuvB hexamer assembles on each DNA strand where it exits the tetramer. Each RuvB hexamer is contacted by two RuvA subunits (via domain III) on 2 adjacent RuvB subunits; this complex drives branch migration. In the full resolvosome a probable DNA-RuvA(4)-RuvB(12)-RuvC(2) complex forms which resolves the HJ.

It is found in the cytoplasm. The RuvA-RuvB-RuvC complex processes Holliday junction (HJ) DNA during genetic recombination and DNA repair, while the RuvA-RuvB complex plays an important role in the rescue of blocked DNA replication forks via replication fork reversal (RFR). RuvA specifically binds to HJ cruciform DNA, conferring on it an open structure. The RuvB hexamer acts as an ATP-dependent pump, pulling dsDNA into and through the RuvAB complex. HJ branch migration allows RuvC to scan DNA until it finds its consensus sequence, where it cleaves and resolves the cruciform DNA. In Polynucleobacter asymbioticus (strain DSM 18221 / CIP 109841 / QLW-P1DMWA-1) (Polynucleobacter necessarius subsp. asymbioticus), this protein is Holliday junction branch migration complex subunit RuvA.